Here is a 140-residue protein sequence, read N- to C-terminus: Large ribosomal subunit protein uL14 (140 aa).

This sequence belongs to the universal ribosomal protein uL14 family. Part of the 50S ribosomal subunit. Forms a cluster with proteins L3 and L24e, part of which may contact the 16S rRNA in 2 intersubunit bridges.

Functionally, binds to 23S rRNA. Forms part of two intersubunit bridges in the 70S ribosome. In Staphylothermus marinus (strain ATCC 43588 / DSM 3639 / JCM 9404 / F1), this protein is Large ribosomal subunit protein uL14.